Reading from the N-terminus, the 196-residue chain is FMN-dependent NADH:quinone oxidoreductase (196 aa).

An FMN-binding site is contributed by Ser10.

Belongs to the azoreductase type 1 family. Homodimer. FMN serves as cofactor.

It carries out the reaction 2 a quinone + NADH + H(+) = 2 a 1,4-benzosemiquinone + NAD(+). The enzyme catalyses N,N-dimethyl-1,4-phenylenediamine + anthranilate + 2 NAD(+) = 2-(4-dimethylaminophenyl)diazenylbenzoate + 2 NADH + 2 H(+). Its function is as follows. Quinone reductase that provides resistance to thiol-specific stress caused by electrophilic quinones. Also exhibits azoreductase activity. Catalyzes the reductive cleavage of the azo bond in aromatic azo compounds to the corresponding amines. The sequence is that of FMN-dependent NADH:quinone oxidoreductase from Cereibacter sphaeroides (strain ATCC 17023 / DSM 158 / JCM 6121 / CCUG 31486 / LMG 2827 / NBRC 12203 / NCIMB 8253 / ATH 2.4.1.) (Rhodobacter sphaeroides).